We begin with the raw amino-acid sequence, 81 residues long: Photosystem I iron-sulfur center (81 aa).

2 consecutive 4Fe-4S ferredoxin-type domains span residues 2–31 (SHIV…MVPW) and 39–68 (MASA…VRVY). 8 residues coordinate [4Fe-4S] cluster: cysteine 11, cysteine 14, cysteine 17, cysteine 21, cysteine 48, cysteine 51, cysteine 54, and cysteine 58.

As to quaternary structure, the eukaryotic PSI reaction center is composed of at least 11 subunits. [4Fe-4S] cluster is required as a cofactor.

It is found in the plastid. The protein resides in the chloroplast thylakoid membrane. It catalyses the reaction reduced [plastocyanin] + hnu + oxidized [2Fe-2S]-[ferredoxin] = oxidized [plastocyanin] + reduced [2Fe-2S]-[ferredoxin]. In terms of biological role, apoprotein for the two 4Fe-4S centers FA and FB of photosystem I (PSI); essential for photochemical activity. FB is the terminal electron acceptor of PSI, donating electrons to ferredoxin. The C-terminus interacts with PsaA/B/D and helps assemble the protein into the PSI complex. Required for binding of PsaD and PsaE to PSI. PSI is a plastocyanin/cytochrome c6-ferredoxin oxidoreductase, converting photonic excitation into a charge separation, which transfers an electron from the donor P700 chlorophyll pair to the spectroscopically characterized acceptors A0, A1, FX, FA and FB in turn. The polypeptide is Photosystem I iron-sulfur center (Stigeoclonium helveticum (Green alga)).